A 412-amino-acid chain; its full sequence is L-cysteine:1D-myo-inositol 2-amino-2-deoxy-alpha-D-glucopyranoside ligase (412 aa).

The tract at residues 1 to 30 is disordered; sequence MQTWSSPSVPKLRGAPRPLRLHDTATGEVR. Cysteine 43 serves as a coordination point for Zn(2+). Residues 43-46, threonine 58, and 81-83 contribute to the L-cysteinyl-5'-AMP site; these read CGIT and NVT. The 'HIGH' region signature appears at 45 to 55; the sequence is ITPYDATHLGH. The 'ERGGDP' region signature appears at 187–192; sequence ERGGDP. Residue tryptophan 227 coordinates L-cysteinyl-5'-AMP. Residue cysteine 231 participates in Zn(2+) binding. Residue 249–251 participates in L-cysteinyl-5'-AMP binding; sequence GSD. Histidine 256 contacts Zn(2+). Isoleucine 283 is an L-cysteinyl-5'-AMP binding site. The 'KMSKS' region motif lies at 289-293; the sequence is KMSKS.

The protein belongs to the class-I aminoacyl-tRNA synthetase family. MshC subfamily. Monomer. Zn(2+) serves as cofactor.

The enzyme catalyses 1D-myo-inositol 2-amino-2-deoxy-alpha-D-glucopyranoside + L-cysteine + ATP = 1D-myo-inositol 2-(L-cysteinylamino)-2-deoxy-alpha-D-glucopyranoside + AMP + diphosphate + H(+). Functionally, catalyzes the ATP-dependent condensation of GlcN-Ins and L-cysteine to form L-Cys-GlcN-Ins. This Actinosynnema mirum (strain ATCC 29888 / DSM 43827 / JCM 3225 / NBRC 14064 / NCIMB 13271 / NRRL B-12336 / IMRU 3971 / 101) protein is L-cysteine:1D-myo-inositol 2-amino-2-deoxy-alpha-D-glucopyranoside ligase.